The sequence spans 207 residues: uncharacterized protein (207 aa).

It to M.leprae ML1660.

This is an uncharacterized protein from Mycobacterium tuberculosis (strain CDC 1551 / Oshkosh).